A 309-amino-acid polypeptide reads, in one-letter code: Potassium channel subfamily K member 16 (309 aa).

Over 1–13 the chain is Cytoplasmic; the sequence is MPSAGLCSCWGGR. Residues 14-34 traverse the membrane as a helical segment; sequence VLPLLLAYVCYLLLGATIFQL. An intramembrane region (pore-forming) is located at residues 98–116; that stretch reads SFFFAGTVVTTIGYGNLAP. K(+) is bound by residues Thr-108, Ile-109, Gly-110, and Tyr-111. The tract at residues 108–113 is selectivity filter 1; it reads TIGYGN. A helical membrane pass occupies residues 120–140; sequence AGQVFCVFYALLGIPLNVIFL. The Cytoplasmic segment spans residues 141–165; the sequence is NHLGTGLRAHLAAIERWEDRPRRSQ. The chain crosses the membrane as a helical span at residues 166-186; sequence VLQVLGLALFLTLGTLVILIF. Positions 202–221 form an intramembrane region, pore-forming; the sequence is GFYFAFITLSTIGFGDYVVG. Residues Thr-212, Ile-213, Gly-214, and Phe-215 each coordinate K(+). The tract at residues 212 to 217 is selectivity filter 2; that stretch reads TIGFGD. The chain crosses the membrane as a helical span at residues 238–258; that stretch reads IWILLGLAWLALILPLGPLLL. At 259–309 the chain is on the cytoplasmic side; sequence HRCCQLWLLSLRQGCGAKAAPGRRPRRGSTAARGVQVTPQDFPISKKGLGS.

This sequence belongs to the two pore domain potassium channel (TC 1.A.1.8) family. In terms of assembly, homodimer; disulfide-linked. Heterodimer with KCNK17 and KCNK5. Highly expressed in pancreas, in both endocrine (alpha, beta, gamma, delta, and epsilon) and exocrine (acinar and ductal) cells. Expressed in pacreatic beta-cells (at protein level). Expressed in pacreatic delta-cells (at protein level). Not detectable in the other tissues tested.

Its subcellular location is the endoplasmic reticulum membrane. It is found in the cell membrane. The protein localises to the mitochondrion inner membrane. The catalysed reaction is K(+)(in) = K(+)(out). It catalyses the reaction Rb(+)(in) = Rb(+)(out). It carries out the reaction Cs(+)(in) = Cs(+)(out). Its activity is regulated as follows. The channel conductance is stimulated by extracellular alkaline pH. Inhibited by Ba(2+) ions, quinine, quinidine, chloroform and halothane. Its function is as follows. K(+) channel that conducts voltage-dependent outward rectifying currents upon membrane depolarization. Voltage sensing is coupled to K(+) electrochemical gradient in an 'ion flux gating' mode where outward but not inward ion flow opens the gate. Homo- and heterodimerizes to form functional channels with distinct regulatory and gating properties. In pancreatic islets, conducts K(+) countercurrents for Ca(2+) release from the endoplasmic reticulum (ER) and regulates the frequency and duration of cytosolic Ca(2+) oscillations coupled to secretion of pancreatic hormones. In pancreatic beta cells, drives ER Ca(2+) efflux, which in turn activates Ca(2+)-dependent plasma membrane K(+) slow currents and cytosolic Ca(2+) influx, overall contributing to synchronous cytosolic Ca(2+) oscillations. Limits glucose-induced cytosolic Ca(2+) oscillations coupled to second-phase INS secretion. Contributes to beta cell adaptation to acute inflammation by maintaining normal cytosolic Ca(2+) levels and INS secretion. May regulate beta cell mitochondrial Ca(2+) levels either indirectly via ER Ca(2+) efflux or directly by hyperpolarizing the mitochondrial membrane potential. Limits mitochondrial Ca(2+) oscillations and ATP production involved in glucose homeostasis upon metabolic stress. In pancreatic delta cells, limits Ca(2+)-induced Ca(2+)-release involved in somatostatin secretion and modulates islet paracrine signaling involved in glucagon secretion. Permeable to other monovalent cations such as Rb(+) and Cs(+). This chain is Potassium channel subfamily K member 16, found in Homo sapiens (Human).